The sequence spans 80 residues: Putative membrane protein insertion efficiency factor (80 aa).

This sequence belongs to the UPF0161 family.

The protein resides in the cell membrane. Its function is as follows. Could be involved in insertion of integral membrane proteins into the membrane. This chain is Putative membrane protein insertion efficiency factor, found in Corynebacterium jeikeium (strain K411).